The sequence spans 903 residues: Cell division cycle protein 48 homolog MJ1156 (903 aa).

ATP-binding positions include 220–227 (GPPGTGKT) and 493–500 (GPPGTGKT).

It belongs to the AAA ATPase family. CDC48 subfamily.

In Methanocaldococcus jannaschii (strain ATCC 43067 / DSM 2661 / JAL-1 / JCM 10045 / NBRC 100440) (Methanococcus jannaschii), this protein is Cell division cycle protein 48 homolog MJ1156.